The primary structure comprises 429 residues: 4-hydroxy-3-methylbut-2-en-1-yl diphosphate synthase (flavodoxin) (429 aa).

Residues C323, C326, C369, and E376 each coordinate [4Fe-4S] cluster.

It belongs to the IspG family. [4Fe-4S] cluster serves as cofactor.

The enzyme catalyses (2E)-4-hydroxy-3-methylbut-2-enyl diphosphate + oxidized [flavodoxin] + H2O + 2 H(+) = 2-C-methyl-D-erythritol 2,4-cyclic diphosphate + reduced [flavodoxin]. Its pathway is isoprenoid biosynthesis; isopentenyl diphosphate biosynthesis via DXP pathway; isopentenyl diphosphate from 1-deoxy-D-xylulose 5-phosphate: step 5/6. Functionally, converts 2C-methyl-D-erythritol 2,4-cyclodiphosphate (ME-2,4cPP) into 1-hydroxy-2-methyl-2-(E)-butenyl 4-diphosphate. The polypeptide is 4-hydroxy-3-methylbut-2-en-1-yl diphosphate synthase (flavodoxin) (Wolbachia sp. subsp. Brugia malayi (strain TRS)).